A 133-amino-acid polypeptide reads, in one-letter code: MSTEGPSLASSPAISPLAFLSAPVTPGTLAEATDPLPMLIALACIFLLLATCLLFMTLCKPAALDPSRRRAHECMPHHPGSPSEPQLRLWKRLGSLRLSLHSFRHGRPTVPRQPLPGPEDNRSHCDYMESTKM.

The chain crosses the membrane as a helical span at residues 36-56 (LPMLIALACIFLLLATCLLFM). The interval 105 to 133 (HGRPTVPRQPLPGPEDNRSHCDYMESTKM) is disordered. The segment covering 119 to 133 (EDNRSHCDYMESTKM) has biased composition (basic and acidic residues).

The protein localises to the membrane. This is an uncharacterized protein from Homo sapiens (Human).